The chain runs to 462 residues: Toxin CfTX-2 (462 aa).

The first 17 residues, 1 to 17, serve as a signal peptide directing secretion; sequence MILVSLLPLLFMTGIAS.

It belongs to the jellyfish toxin family. Type I subfamily. As to quaternary structure, oligomer. Contains disulfide bonds. As to expression, nematocytes.

It is found in the secreted. The protein resides in the nematocyst. Its subcellular location is the target cell membrane. Functionally, may cause profound effects on the cardiovascular system of anesthetized rats (at 25 ug/kg), since the fraction containing this toxin and CfTX-1 produces an initial increase in mean arterial pressure, followed by cardiovascular collapse in all animals within 1 minute of injection. To note, the same fraction does not induce significant change in heart rate. Has weak hemolytic activity. Is lethal to crayfish. Causes cutaneous inflammation in humans. May act as a pore-forming toxin, disrupting normal transmembrane ion concentration gradients in susceptible cells. This is Toxin CfTX-2 from Chironex fleckeri (Australian box jellyfish).